The primary structure comprises 140 residues: PDZ domain-containing protein 11 (140 aa).

The region spanning 47 to 129 (IVTLKKPPGA…ISMRVRFFPY (83 aa)) is the PDZ domain.

Interacts with ATP2B1, ATP2B2, ATP2B3, ATP2B4 and ATP7A. Interacts with PLEKHA7 (via WW domains) at zonula adherens; this interaction is essential for the interaction between PLEKHA7 and the ADAM10-binding protein TSPAN33. Interacts with SLC5A6.

It localises to the cytoplasm. The protein resides in the cell junction. Its subcellular location is the adherens junction. It is found in the cell membrane. Mediates docking of ADAM10 to zonula adherens by interacting with PLEKHA7 which is required for PLEKHA7 to interact with the ADAM10-binding protein TSPAN33. The sequence is that of PDZ domain-containing protein 11 (PDZD11) from Bos taurus (Bovine).